A 410-amino-acid chain; its full sequence is Neuroserpin (410 aa).

Positions 1–16 (MAYLGLLSLVALQSLV) are cleaved as a signal peptide. Ser83 carries the phosphoserine modification. N-linked (GlcNAc...) asparagine glycosylation is found at Asn157, Asn321, and Asn401. O-linked (Xyl...) (chondroitin sulfate) serine glycosylation is present at Ser403.

It belongs to the serpin family. In terms of tissue distribution, detected in adult pituitary and adrenal gland.

The protein localises to the secreted. Its subcellular location is the cytoplasmic vesicle. It is found in the secretory vesicle lumen. The protein resides in the perikaryon. Serine protease inhibitor that inhibits plasminogen activators and plasmin but not thrombin. May be involved in the formation or reorganization of synaptic connections as well as for synaptic plasticity in the adult nervous system. May protect neurons from cell damage by tissue-type plasminogen activator. The polypeptide is Neuroserpin (Serpini1) (Rattus norvegicus (Rat)).